The following is a 164-amino-acid chain: 6,7-dimethyl-8-ribityllumazine synthase (164 aa).

Residues Tyr-27, 58-60 (ALE), and 87-89 (CVI) each bind 5-amino-6-(D-ribitylamino)uracil. 92–93 (ET) is a binding site for (2S)-2-hydroxy-3-oxobutyl phosphate. His-95 functions as the Proton donor in the catalytic mechanism. Asn-120 serves as a coordination point for 5-amino-6-(D-ribitylamino)uracil. Arg-134 contributes to the (2S)-2-hydroxy-3-oxobutyl phosphate binding site.

It belongs to the DMRL synthase family.

The enzyme catalyses (2S)-2-hydroxy-3-oxobutyl phosphate + 5-amino-6-(D-ribitylamino)uracil = 6,7-dimethyl-8-(1-D-ribityl)lumazine + phosphate + 2 H2O + H(+). The protein operates within cofactor biosynthesis; riboflavin biosynthesis; riboflavin from 2-hydroxy-3-oxobutyl phosphate and 5-amino-6-(D-ribitylamino)uracil: step 1/2. Its function is as follows. Catalyzes the formation of 6,7-dimethyl-8-ribityllumazine by condensation of 5-amino-6-(D-ribitylamino)uracil with 3,4-dihydroxy-2-butanone 4-phosphate. This is the penultimate step in the biosynthesis of riboflavin. The protein is 6,7-dimethyl-8-ribityllumazine synthase of Methylocella silvestris (strain DSM 15510 / CIP 108128 / LMG 27833 / NCIMB 13906 / BL2).